The chain runs to 518 residues: Anthranilate synthase component 1 (518 aa).

Residues Ser-41 and 291–293 contribute to the L-tryptophan site; that span reads PYM. 328–329 is a chorismate binding site; the sequence is GS. Glu-361 is a Mg(2+) binding site. Residues Tyr-449, Arg-469, 483–485, and Gly-485 each bind chorismate; that span reads GCG. Glu-498 contributes to the Mg(2+) binding site.

Belongs to the anthranilate synthase component I family. In terms of assembly, heterotetramer consisting of two non-identical subunits: a beta subunit (TrpG) and a large alpha subunit (TrpE). Mg(2+) serves as cofactor.

It carries out the reaction chorismate + L-glutamine = anthranilate + pyruvate + L-glutamate + H(+). It functions in the pathway amino-acid biosynthesis; L-tryptophan biosynthesis; L-tryptophan from chorismate: step 1/5. With respect to regulation, feedback inhibited by tryptophan. Part of a heterotetrameric complex that catalyzes the two-step biosynthesis of anthranilate, an intermediate in the biosynthesis of L-tryptophan. In the first step, the glutamine-binding beta subunit (TrpG) of anthranilate synthase (AS) provides the glutamine amidotransferase activity which generates ammonia as a substrate that, along with chorismate, is used in the second step, catalyzed by the large alpha subunit of AS (TrpE) to produce anthranilate. In the absence of TrpG, TrpE can synthesize anthranilate directly from chorismate and high concentrations of ammonia. The sequence is that of Anthranilate synthase component 1 (trpE) from Haemophilus influenzae (strain ATCC 51907 / DSM 11121 / KW20 / Rd).